Consider the following 852-residue polypeptide: GPI ethanolamine phosphate transferase 2 (852 aa).

N-linked (GlcNAc...) asparagine glycans are attached at residues asparagine 191 and asparagine 420. A run of 3 helical transmembrane segments spans residues 458-478 (LIRLYVGLSISGFAISLTFFP), 486-506 (FAPAGMFLGFSILSYSTMMFA), and 516-536 (FWYWISMGWVVYLHVKYAGHF). The N-linked (GlcNAc...) asparagine glycan is linked to asparagine 576. 6 consecutive transmembrane segments (helical) span residues 632 to 652 (LLYHARMVLCGISLLMIYSLY), 676 to 696 (TLTLFLLMQSKVTNIPAFLVF), 714 to 734 (TITSLLMQYVTFYAFGGSNAI), 750 to 770 (SVFIVGALTFISNWAAPIWWV), 787 to 807 (AHVTILTLHMATILMSVMAAC), and 824 to 844 (YLYTIAWAMINHIVVNVLGEI).

This sequence belongs to the PIGG/PIGN/PIGO family. PIGG subfamily.

Its subcellular location is the endoplasmic reticulum membrane. It functions in the pathway glycolipid biosynthesis; glycosylphosphatidylinositol-anchor biosynthesis. In terms of biological role, ethanolamine phosphate transferase involved in glycosylphosphatidylinositol-anchor biosynthesis. Transfers ethanolamine phosphate to the GPI second mannose. This Aspergillus oryzae (strain ATCC 42149 / RIB 40) (Yellow koji mold) protein is GPI ethanolamine phosphate transferase 2 (las21).